A 250-amino-acid chain; its full sequence is Enoyl-[acyl-carrier-protein] reductase [NADPH] FabL (250 aa).

Residues 13 to 16 (SRGV), 36 to 38 (ARS), 62 to 63 (NV), and Asn-89 contribute to the NADP(+) site. Catalysis depends on proton acceptor residues Tyr-151 and Lys-158. NADP(+) contacts are provided by residues Lys-158 and 187-189 (IDT).

This sequence belongs to the short-chain dehydrogenases/reductases (SDR) family. In terms of assembly, homotetramer.

The enzyme catalyses a 2,3-saturated acyl-[ACP] + NADP(+) = a (2E)-enoyl-[ACP] + NADPH + H(+). It carries out the reaction (2E)-butenoyl-[ACP] + NADPH + H(+) = butanoyl-[ACP] + NADP(+). Its pathway is lipid metabolism; fatty acid biosynthesis. Inhibited by triclosan. Its function is as follows. Catalyzes the reduction of a carbon-carbon double bond in an enoyl moiety that is covalently linked to an acyl carrier protein (ACP). It confers resistance to triclosan. The protein is Enoyl-[acyl-carrier-protein] reductase [NADPH] FabL (fabL) of Bacillus subtilis (strain 168).